The sequence spans 198 residues: Superoxide dismutase [Mn], mitochondrial (198 aa).

Mn(2+) is bound at residue H26. A 3'-nitrotyrosine modification is found at Y34. Residues K44 and K51 each carry the N6-acetyllysine; alternate modification. N6-succinyllysine; alternate occurs at positions 44 and 51. H74 contributes to the Mn(2+) binding site. N6-acetyllysine is present on K90. Residues K98 and K106 each carry the N6-acetyllysine; alternate modification. 2 positions are modified to N6-succinyllysine; alternate: K98 and K106. Mn(2+) is bound by residues D159 and H163. K178 bears the N6-acetyllysine mark.

This sequence belongs to the iron/manganese superoxide dismutase family. In terms of assembly, homotetramer. It depends on Mn(2+) as a cofactor. Nitrated under oxidative stress. Nitration coupled with oxidation inhibits the catalytic activity. Post-translationally, acetylation at Lys-98 decreases enzymatic activity. Deacetylated by SIRT3 upon exposure to ionizing radiations or after long fasting. In terms of processing, polyubiquitinated; leading to proteasomal degradation. Deubiquitinated by USP36 which increases protein stability.

Its subcellular location is the mitochondrion matrix. It catalyses the reaction 2 superoxide + 2 H(+) = H2O2 + O2. Destroys superoxide anion radicals which are normally produced within the cells and which are toxic to biological systems. The chain is Superoxide dismutase [Mn], mitochondrial (SOD2) from Macaca fuscata fuscata (Japanese macaque).